The chain runs to 373 residues: Probable tRNA sulfurtransferase (373 aa).

The region spanning 54–158 is the THUMP domain; sequence NKNIEELSKV…NDVAYFYHKI (105 aa). Residues 176–177, 201–202, lysine 256, glycine 278, and glutamine 287 contribute to the ATP site; these read LF and NF.

Belongs to the ThiI family.

Its subcellular location is the cytoplasm. It carries out the reaction [ThiI sulfur-carrier protein]-S-sulfanyl-L-cysteine + a uridine in tRNA + 2 reduced [2Fe-2S]-[ferredoxin] + ATP + H(+) = [ThiI sulfur-carrier protein]-L-cysteine + a 4-thiouridine in tRNA + 2 oxidized [2Fe-2S]-[ferredoxin] + AMP + diphosphate. The catalysed reaction is [ThiS sulfur-carrier protein]-C-terminal Gly-Gly-AMP + S-sulfanyl-L-cysteinyl-[cysteine desulfurase] + AH2 = [ThiS sulfur-carrier protein]-C-terminal-Gly-aminoethanethioate + L-cysteinyl-[cysteine desulfurase] + A + AMP + 2 H(+). It functions in the pathway cofactor biosynthesis; thiamine diphosphate biosynthesis. In terms of biological role, catalyzes the ATP-dependent transfer of a sulfur to tRNA to produce 4-thiouridine in position 8 of tRNAs, which functions as a near-UV photosensor. Also catalyzes the transfer of sulfur to the sulfur carrier protein ThiS, forming ThiS-thiocarboxylate. This is a step in the synthesis of thiazole, in the thiamine biosynthesis pathway. The sulfur is donated as persulfide by IscS. The sequence is that of Probable tRNA sulfurtransferase from Saccharolobus islandicus (strain M.16.4 / Kamchatka #3) (Sulfolobus islandicus).